The sequence spans 550 residues: Gamma-aminobutyric acid receptor subunit beta (550 aa).

The signal sequence occupies residues 1-24 (MRRSKTRRIFHVSITLLLVSTIFC). Residues 25 to 264 (QNGTKPHNNS…FQLRRSVGYF (240 aa)) lie on the Extracellular side of the membrane. N-linked (GlcNAc...) asparagine glycans are attached at residues Asn26, Asn32, Asn33, Asn45, Asn53, and Asn193. Cys180 and Cys194 are joined by a disulfide. 3 helical membrane passes run 265 to 285 (IFQT…SFWI), 292 to 311 (ARVA…STGV), and 324 to 344 (IDIY…EYAA). The Cytoplasmic segment spans residues 345 to 527 (VNYSYWGRER…DVNLIDKYSR (183 aa)). The disordered stretch occupies residues 405–465 (AMSTSNTAAQ…TTSLKGARPH (61 aa)). Residues 406 to 421 (MSTSNTAAQNNNFEST) are compositionally biased toward polar residues. A helical transmembrane segment spans residues 528-548 (VVFPVCFIVFNLFYWSYYMMV).

Belongs to the ligand-gated ion channel (TC 1.A.9) family. Gamma-aminobutyric acid receptor (TC 1.A.9.5) subfamily.

It localises to the postsynaptic cell membrane. Its subcellular location is the cell membrane. Its function is as follows. GABA, an inhibitory neurotransmitter, mediates neuronal inhibition by binding to the GABA receptor and opening an integral chloride channel. The sequence is that of Gamma-aminobutyric acid receptor subunit beta (gab-1) from Caenorhabditis elegans.